The sequence spans 408 residues: Dual-specificity RNA methyltransferase RlmN (408 aa).

The active-site Proton acceptor is Glu-120. The 250-residue stretch at 126 to 375 (EEGRGTLCIS…IRTPRGRDIL (250 aa)) folds into the Radical SAM core domain. Residues Cys-133 and Cys-378 are joined by a disulfide bond. [4Fe-4S] cluster-binding residues include Cys-140, Cys-144, and Cys-147. S-adenosyl-L-methionine is bound by residues 204-205 (GE), Ser-236, 258-260 (SLH), and Asn-335. Residue Cys-378 is the S-methylcysteine intermediate of the active site.

Belongs to the radical SAM superfamily. RlmN family. [4Fe-4S] cluster is required as a cofactor.

The protein localises to the cytoplasm. The catalysed reaction is adenosine(2503) in 23S rRNA + 2 reduced [2Fe-2S]-[ferredoxin] + 2 S-adenosyl-L-methionine = 2-methyladenosine(2503) in 23S rRNA + 5'-deoxyadenosine + L-methionine + 2 oxidized [2Fe-2S]-[ferredoxin] + S-adenosyl-L-homocysteine. It catalyses the reaction adenosine(37) in tRNA + 2 reduced [2Fe-2S]-[ferredoxin] + 2 S-adenosyl-L-methionine = 2-methyladenosine(37) in tRNA + 5'-deoxyadenosine + L-methionine + 2 oxidized [2Fe-2S]-[ferredoxin] + S-adenosyl-L-homocysteine. In terms of biological role, specifically methylates position 2 of adenine 2503 in 23S rRNA and position 2 of adenine 37 in tRNAs. m2A2503 modification seems to play a crucial role in the proofreading step occurring at the peptidyl transferase center and thus would serve to optimize ribosomal fidelity. This is Dual-specificity RNA methyltransferase RlmN from Rhizobium leguminosarum bv. trifolii (strain WSM2304).